Here is a 601-residue protein sequence, read N- to C-terminus: Glutathione-regulated potassium-efflux system protein KefB (601 aa).

13 helical membrane passes run 4 to 24 (ADLL…VPLA), 29 to 49 (IGAV…GLGF), 55 to 75 (EILH…GLEL), 87 to 107 (IFGV…GLLM), 111 to 131 (FLWQ…TAMA), 152 to 172 (VLLF…LLAG), 177 to 197 (HFDW…LIGG), 207 to 227 (FIAA…LVLS), 230 to 250 (LFMD…GVLL), 262 to 282 (AIDP…GMSL), 284 to 304 (LGVL…LVAI), 324 to 344 (MQFA…FSTA), and 356 to 376 (ALLL…MKGI). An RCK N-terminal domain is found at 400-519 (KPQVIVVGFG…AGVTQFSRET (120 aa)).

This sequence belongs to the monovalent cation:proton antiporter 2 (CPA2) transporter (TC 2.A.37) family. KefB subfamily. In terms of assembly, interacts with the regulatory subunit KefG.

The protein resides in the cell inner membrane. Its function is as follows. Pore-forming subunit of a potassium efflux system that confers protection against electrophiles. Catalyzes K(+)/H(+) antiport. The polypeptide is Glutathione-regulated potassium-efflux system protein KefB (Salmonella schwarzengrund (strain CVM19633)).